The primary structure comprises 156 residues: Small ribosomal subunit protein uS7 (156 aa).

The protein belongs to the universal ribosomal protein uS7 family. Part of the 30S ribosomal subunit. Contacts proteins S9 and S11.

Its function is as follows. One of the primary rRNA binding proteins, it binds directly to 16S rRNA where it nucleates assembly of the head domain of the 30S subunit. Is located at the subunit interface close to the decoding center, probably blocks exit of the E-site tRNA. This Actinobacillus pleuropneumoniae serotype 5b (strain L20) protein is Small ribosomal subunit protein uS7.